Reading from the N-terminus, the 484-residue chain is Glutamate--tRNA ligase (484 aa).

The short motif at 11 to 21 (PSPTGLLHIGN) is the 'HIGH' region element. A 'KMSKS' region motif is present at residues 255–259 (KLSKR). K258 provides a ligand contact to ATP.

It belongs to the class-I aminoacyl-tRNA synthetase family. Glutamate--tRNA ligase type 1 subfamily. In terms of assembly, monomer.

The protein resides in the cytoplasm. It catalyses the reaction tRNA(Glu) + L-glutamate + ATP = L-glutamyl-tRNA(Glu) + AMP + diphosphate. Functionally, catalyzes the attachment of glutamate to tRNA(Glu) in a two-step reaction: glutamate is first activated by ATP to form Glu-AMP and then transferred to the acceptor end of tRNA(Glu). The protein is Glutamate--tRNA ligase of Streptococcus agalactiae serotype III (strain NEM316).